Reading from the N-terminus, the 148-residue chain is Large ribosomal subunit protein uL15B (148 aa).

Basic residues-rich tracts occupy residues 1 to 13 and 21 to 31; these read MPTHTSKTRKLRG and RIGKHRKHPGG. The disordered stretch occupies residues 1 to 38; it reads MPTHTSKTRKLRGHVSAGHGRIGKHRKHPGGRGKAGGL. The residue at position 108 (Y108) is a Phosphotyrosine.

It belongs to the universal ribosomal protein uL15 family. Component of the large ribosomal subunit (LSU). Mature yeast ribosomes consist of a small (40S) and a large (60S) subunit. The 40S small subunit contains 1 molecule of ribosomal RNA (18S rRNA) and at least 33 different proteins. The large 60S subunit contains 3 rRNA molecules (25S, 5.8S and 5S rRNA) and at least 46 different proteins.

Its subcellular location is the cytoplasm. The protein resides in the nucleus. It localises to the nucleolus. Component of the ribosome, a large ribonucleoprotein complex responsible for the synthesis of proteins in the cell. The small ribosomal subunit (SSU) binds messenger RNAs (mRNAs) and translates the encoded message by selecting cognate aminoacyl-transfer RNA (tRNA) molecules. The large subunit (LSU) contains the ribosomal catalytic site termed the peptidyl transferase center (PTC), which catalyzes the formation of peptide bonds, thereby polymerizing the amino acids delivered by tRNAs into a polypeptide chain. The nascent polypeptides leave the ribosome through a tunnel in the LSU and interact with protein factors that function in enzymatic processing, targeting, and the membrane insertion of nascent chains at the exit of the ribosomal tunnel. This Schizosaccharomyces pombe (strain 972 / ATCC 24843) (Fission yeast) protein is Large ribosomal subunit protein uL15B (rpl2801).